The sequence spans 460 residues: tRNA modification GTPase MnmE (460 aa).

(6S)-5-formyl-5,6,7,8-tetrahydrofolate is bound by residues R29, E91, and K132. The TrmE-type G domain occupies 227 to 383 (GISIALIGKT…LIDTIIKKCG (157 aa)). N237 contacts K(+). GTP contacts are provided by residues 237 to 242 (NVGKSS), 256 to 262 (TNIPGTT), and 281 to 284 (DTAG). Residue S241 coordinates Mg(2+). 3 residues coordinate K(+): T256, I258, and T261. T262 serves as a coordination point for Mg(2+). K460 contacts (6S)-5-formyl-5,6,7,8-tetrahydrofolate.

Belongs to the TRAFAC class TrmE-Era-EngA-EngB-Septin-like GTPase superfamily. TrmE GTPase family. Homodimer. Heterotetramer of two MnmE and two MnmG subunits. Requires K(+) as cofactor.

The protein localises to the cytoplasm. Exhibits a very high intrinsic GTPase hydrolysis rate. Involved in the addition of a carboxymethylaminomethyl (cmnm) group at the wobble position (U34) of certain tRNAs, forming tRNA-cmnm(5)s(2)U34. The sequence is that of tRNA modification GTPase MnmE from Prochlorococcus marinus (strain MIT 9215).